Consider the following 152-residue polypeptide: D-aminoacyl-tRNA deacylase (152 aa).

Positions 142 to 143 match the Gly-cisPro motif, important for rejection of L-amino acids motif; it reads GP.

It belongs to the DTD family. As to quaternary structure, homodimer.

The protein localises to the cytoplasm. It carries out the reaction glycyl-tRNA(Ala) + H2O = tRNA(Ala) + glycine + H(+). It catalyses the reaction a D-aminoacyl-tRNA + H2O = a tRNA + a D-alpha-amino acid + H(+). An aminoacyl-tRNA editing enzyme that deacylates mischarged D-aminoacyl-tRNAs. Also deacylates mischarged glycyl-tRNA(Ala), protecting cells against glycine mischarging by AlaRS. Acts via tRNA-based rather than protein-based catalysis; rejects L-amino acids rather than detecting D-amino acids in the active site. By recycling D-aminoacyl-tRNA to D-amino acids and free tRNA molecules, this enzyme counteracts the toxicity associated with the formation of D-aminoacyl-tRNA entities in vivo and helps enforce protein L-homochirality. The chain is D-aminoacyl-tRNA deacylase from Burkholderia ambifaria (strain ATCC BAA-244 / DSM 16087 / CCUG 44356 / LMG 19182 / AMMD) (Burkholderia cepacia (strain AMMD)).